Reading from the N-terminus, the 633-residue chain is Mitochondrial Rho GTPase 1 (633 aa).

Residues 1-170 (MATVRICVCG…FFLCQKAVTH (170 aa)) enclose the Miro 1 domain. Over 1-603 (MATVRICVCG…PRSEEDVEGK (603 aa)) the chain is Cytoplasmic. GTP-binding positions include 10-17 (GDEGTGKS), 59-63 (DTSAL), and 115-118 (NKSD). 2 consecutive EF-hand domains span residues 186–221 (AAVA…CFEK) and 306–341 (EGYR…TPGL). Residues Asp-199, Asp-201, Asp-203, Tyr-205, Glu-210, Asp-319, Asp-321, Asp-323, and Glu-330 each contribute to the Ca(2+) site. The segment at 398 to 418 (NPSTTAALKVTRPRKRRKRPG) is disordered. Residues 408-418 (TRPRKRRKRPG) are compositionally biased toward basic residues. A Miro 2 domain is found at 422 to 588 (RNVVLGHVLG…FVHIAEAAME (167 aa)). Residues 431-438 (GPPGSGKS), 467-471 (ELPGG), and 537-540 (LKAD) contribute to the GTP site. The chain crosses the membrane as a helical; Anchor for type IV membrane protein span at residues 604-624 (WMAWGIALGAVVCAGAAAVMI). At 625-633 (WRRVSGSGT) the chain is on the mitochondrial intermembrane side.

This sequence belongs to the mitochondrial Rho GTPase family.

Its subcellular location is the mitochondrion outer membrane. Functionally, mitochondrial GTPase involved in mitochondrial trafficking. Probably involved in control of anterograde transport of mitochondria and their subcellular distribution. The sequence is that of Mitochondrial Rho GTPase 1 (gem1) from Aspergillus oryzae (strain ATCC 42149 / RIB 40) (Yellow koji mold).